A 1023-amino-acid polypeptide reads, in one-letter code: 1-phosphatidylinositol 4,5-bisphosphate phosphodiesterase beta-4 (1023 aa).

A PI-PLC X-box domain is found at Q149–Q299. Catalysis depends on residues H164 and H211. The region spanning L413 to R529 is the PI-PLC Y-box domain. In terms of domain architecture, C2 spans D532–L657. 2 disordered regions span residues A711 to R742 and K930 to L958. 2 stretches are compositionally biased toward polar residues: residues A729–R742 and M933–D942. T734 is subject to Phosphothreonine. The span at K943–E957 shows a compositional bias: basic and acidic residues.

Ca(2+) serves as cofactor. Post-translationally, the N-terminus is blocked. In terms of tissue distribution, preferentially expressed in the retina.

The protein localises to the cell membrane. It carries out the reaction a 1,2-diacyl-sn-glycero-3-phospho-(1D-myo-inositol-4,5-bisphosphate) + H2O = 1D-myo-inositol 1,4,5-trisphosphate + a 1,2-diacyl-sn-glycerol + H(+). It catalyses the reaction a 1,2-diacyl-sn-glycero-3-phospho-(1D-myo-inositol) + H2O = 1D-myo-inositol 1-phosphate + a 1,2-diacyl-sn-glycerol + H(+). Its function is as follows. Activated phosphatidylinositol-specific phospholipase C enzymes catalyze the production of the second messenger molecules diacylglycerol (DAG) and inositol 1,4,5-trisphosphate (IP3) involved in G-protein coupled receptor signaling pathways. PLCB4 is a direct effector of the endothelin receptor signaling pathway that plays an essential role in lower jaw and middle ear structures development. The sequence is that of 1-phosphatidylinositol 4,5-bisphosphate phosphodiesterase beta-4 (PLCB4) from Bos taurus (Bovine).